A 441-amino-acid chain; its full sequence is MLRKLTSNSSRWTTTHLGSLWQEVGGHPIRRGLILHHHCRPLAAVSSGVILRQKEESRWSPNSGGKLANLRCWPEYRLHSATKRRTLGELVLRDYSSNNISDKKPEPKSLLQSIVQNPYARLMRIDRPIGSWLLFWPCGWSIALSAPAGCWPDLWTLTLFGAGAFIMRGAGCTINDMWDRDIDGKVARTRNRPLVAGELTSADAWFFLGAQLGVGLLILLELNWYSIVLGASSLGLVIIYPLMKRITHWPQLVLGMTFNWGALLGWSATQGSVMWSACLPLYVAGVCWTIVYDTIYAHQDKVDDALLGIKSTAIRFGDNTKLWLSGFSTAMIGGLVASGMVCEQTWPYYSAVGVISAHLAHQIYSLNIDNPTDCATKFISNHQVGLILFLGIVLGTLYKGYSQRAGKSSTTSSSSTSSSSSPSSGLLLAATNHHQPARQAS.

The N-terminal 95 residues, 1-95, are a transit peptide targeting the mitochondrion; it reads MLRKLTSNSS…TLGELVLRDY (95 aa). 8 helical membrane passes run 129-149, 154-174, 204-224, 225-245, 246-266, 271-291, 322-342, and 378-398; these read IGSW…APAG, LWTL…GCTI, AWFF…ELNW, YSIV…LMKR, ITHW…LLGW, GSVM…WTIV, LWLS…GMVC, and FISN…GTLY. The tract at residues 405–441 is disordered; it reads AGKSSTTSSSSTSSSSSPSSGLLLAATNHHQPARQAS. The span at 408–424 shows a compositional bias: low complexity; the sequence is SSTTSSSSTSSSSSPSS. Over residues 432–441 the composition is skewed to polar residues; the sequence is NHHQPARQAS.

This sequence belongs to the UbiA prenyltransferase family. Mg(2+) serves as cofactor.

The protein resides in the mitochondrion inner membrane. It carries out the reaction an all-trans-polyprenyl diphosphate + 4-hydroxybenzoate = a 4-hydroxy-3-(all-trans-polyprenyl)benzoate + diphosphate. Its pathway is cofactor biosynthesis; ubiquinone biosynthesis. In terms of biological role, catalyzes the prenylation of para-hydroxybenzoate (PHB) with an all-trans polyprenyl group. Mediates the second step in the final reaction sequence of coenzyme Q (CoQ) biosynthesis, which is the condensation of the polyisoprenoid side chain with PHB, generating the first membrane-bound Q intermediate. This Aedes aegypti (Yellowfever mosquito) protein is 4-hydroxybenzoate polyprenyltransferase, mitochondrial.